The primary structure comprises 756 residues: Photosystem I P700 chlorophyll a apoprotein A1 (756 aa).

8 consecutive transmembrane segments (helical) span residues 73–96 (IFSA…FHGA), 159–182 (LYVT…FHYH), 198–222 (MNHH…HVSL), 298–316 (TAHH…GHMY), 353–376 (WHAQ…HHMY), 392–418 (LSLF…IYMV), 440–462 (AIIS…LYIH), and 537–555 (FLVH…LILL). [4Fe-4S] cluster-binding residues include C579 and C588. 2 helical membrane-spanning segments follow: residues 595–616 (HVFL…HFSW) and 670–692 (LSAY…MFLF). Residue H681 coordinates chlorophyll a'. Chlorophyll a-binding residues include M689 and Y697. W698 lines the phylloquinone pocket. Residues 730 to 750 (AVGVAHYLLGGIATTWAFFLA) form a helical membrane-spanning segment.

The protein belongs to the PsaA/PsaB family. As to quaternary structure, the PsaA/B heterodimer binds the P700 chlorophyll special pair and subsequent electron acceptors. PSI consists of a core antenna complex that captures photons, and an electron transfer chain that converts photonic excitation into a charge separation. The cyanobacterial PSI reaction center is composed of one copy each of PsaA,B,C,D,E,F,I,J,K,L,M and X, and forms trimeric complexes. PSI electron transfer chain: 5 chlorophyll a, 1 chlorophyll a', 2 phylloquinones and 3 4Fe-4S clusters. PSI core antenna: 90 chlorophyll a, 22 carotenoids, 3 phospholipids and 1 galactolipid. P700 is a chlorophyll a/chlorophyll a' dimer, A0 is one or more chlorophyll a, A1 is one or both phylloquinones and FX is a shared 4Fe-4S iron-sulfur center. serves as cofactor.

The protein resides in the cellular thylakoid membrane. It catalyses the reaction reduced [plastocyanin] + hnu + oxidized [2Fe-2S]-[ferredoxin] = oxidized [plastocyanin] + reduced [2Fe-2S]-[ferredoxin]. Its function is as follows. PsaA and PsaB bind P700, the primary electron donor of photosystem I (PSI), as well as the electron acceptors A0, A1 and FX. PSI is a plastocyanin/cytochrome c6-ferredoxin oxidoreductase, converting photonic excitation into a charge separation, which transfers an electron from the donor P700 chlorophyll pair to the spectroscopically characterized acceptors A0, A1, FX, FA and FB in turn. Oxidized P700 is reduced on the lumenal side of the thylakoid membrane by plastocyanin or cytochrome c6. This is Photosystem I P700 chlorophyll a apoprotein A1 from Cyanothece sp. (strain PCC 7425 / ATCC 29141).